A 117-amino-acid polypeptide reads, in one-letter code: Nuclear transition protein 2 (117 aa).

The interval 1–117 (MDTKMQSLPT…KRRSSGRRYK (117 aa)) is disordered. Residues 7 to 26 (SLPTTHPHPHSSSRPQSHTS) show a composition bias toward low complexity. 8 residues coordinate Zn(2+): His-12, His-14, His-16, His-24, Cys-32, Cys-34, Cys-38, and Cys-41. Positions 44–53 (AGHAGSSSSP) are enriched in low complexity. Composition is skewed to basic residues over residues 60–77 (KHPKPSVHSRHSPARPSH) and 93–117 (SKRKAVRRRKRTHRAKRRSSGRRYK). A Nuclear localization signal motif is present at residues 90–98 (GKVSKRKAV). Phosphoserine is present on Ser-112.

The protein belongs to the nuclear transition protein 2 family.

Its subcellular location is the nucleus. It localises to the chromosome. In terms of biological role, plays a key role in the replacement of histones to protamine in the elongating spermatids of mammals. In condensing spermatids, loaded onto the nucleosomes, where it promotes the recruitment and processing of protamines, which are responsible for histone eviction. The histone H2AB1-H2BC1/TH2B dimer is required for loading of TNP2 onto chromatin. In Mus musculus (Mouse), this protein is Nuclear transition protein 2.